We begin with the raw amino-acid sequence, 102 residues long: MSAISRDEVAHLARLARLALTDAELDGYAGQLDAILGHVSQISAVSTDELDEVDATSSPLDAVNVTRPDVIAECLTPEEALAAAPRVAEGRFAVPQILGEEE.

The protein belongs to the GatC family. As to quaternary structure, heterotrimer of A, B and C subunits.

It carries out the reaction L-glutamyl-tRNA(Gln) + L-glutamine + ATP + H2O = L-glutaminyl-tRNA(Gln) + L-glutamate + ADP + phosphate + H(+). The enzyme catalyses L-aspartyl-tRNA(Asn) + L-glutamine + ATP + H2O = L-asparaginyl-tRNA(Asn) + L-glutamate + ADP + phosphate + 2 H(+). Functionally, allows the formation of correctly charged Asn-tRNA(Asn) or Gln-tRNA(Gln) through the transamidation of misacylated Asp-tRNA(Asn) or Glu-tRNA(Gln) in organisms which lack either or both of asparaginyl-tRNA or glutaminyl-tRNA synthetases. The reaction takes place in the presence of glutamine and ATP through an activated phospho-Asp-tRNA(Asn) or phospho-Glu-tRNA(Gln). This Mycobacteroides abscessus (strain ATCC 19977 / DSM 44196 / CCUG 20993 / CIP 104536 / JCM 13569 / NCTC 13031 / TMC 1543 / L948) (Mycobacterium abscessus) protein is Aspartyl/glutamyl-tRNA(Asn/Gln) amidotransferase subunit C.